A 279-amino-acid chain; its full sequence is uncharacterized protein (279 aa).

In terms of domain architecture, HTH lysR-type spans 14–71 (ITPNQIKLLIALHKTKSQNEAAKLLNIKPSSFNIQLKRLENKLGVKLYYSSPNGTVLT). A DNA-binding region (H-T-H motif) is located at residues 31–50 (QNEAAKLLNIKPSSFNIQLK).

Belongs to the LysR transcriptional regulatory family.

This is an uncharacterized protein from Methanocaldococcus jannaschii (strain ATCC 43067 / DSM 2661 / JAL-1 / JCM 10045 / NBRC 100440) (Methanococcus jannaschii).